The sequence spans 339 residues: MSRITLAELAEKLDATVHGDGTVVVHSIASMSKAKEGDITFLSDAKYRKHLVECQASAVIVKEADVEFCQSNVLIMRDPYLGFALAAQALDTTPAPASDIAPSAYIADDAIIGEGVAIGHNAVIESKAVIADGAMIGAGCFIGKEAKIGKNTKLWANVSVYHRVEIGEACLVQSGTVIGSDGFGYANDRGTWVKIPQLGSVIIGDNVEIGANTTIDRGAIDDTVIESNVIIDNQIQIAHNVQIGSGSAMAGGTIVAGSTKIGKHCIIGGGSVINGHIEITDGVTITGMGMVMRAIDEKGMYSSGIPLQTNKEWRKTAARVHKIDEMNKRLKAVEKKLVD.

H239 functions as the Proton acceptor in the catalytic mechanism.

The protein belongs to the transferase hexapeptide repeat family. LpxD subfamily. Homotrimer.

The enzyme catalyses a UDP-3-O-[(3R)-3-hydroxyacyl]-alpha-D-glucosamine + a (3R)-hydroxyacyl-[ACP] = a UDP-2-N,3-O-bis[(3R)-3-hydroxyacyl]-alpha-D-glucosamine + holo-[ACP] + H(+). The protein operates within bacterial outer membrane biogenesis; LPS lipid A biosynthesis. In terms of biological role, catalyzes the N-acylation of UDP-3-O-acylglucosamine using 3-hydroxyacyl-ACP as the acyl donor. Is involved in the biosynthesis of lipid A, a phosphorylated glycolipid that anchors the lipopolysaccharide to the outer membrane of the cell. This chain is UDP-3-O-acylglucosamine N-acyltransferase, found in Aliivibrio fischeri (strain ATCC 700601 / ES114) (Vibrio fischeri).